The primary structure comprises 683 residues: Heat shock protein homolog ECU03_0520 (683 aa).

The protein belongs to the heat shock protein 70 family.

Its subcellular location is the cytoplasm. The polypeptide is Heat shock protein homolog ECU03_0520 (Encephalitozoon cuniculi (strain GB-M1) (Microsporidian parasite)).